Here is a 380-residue protein sequence, read N- to C-terminus: Cytochrome b (380 aa).

Helical transmembrane passes span 34 to 54 (FGSL…LLAM), 78 to 99 (WLIR…YLHI), 114 to 134 (WNTG…GYVL), and 179 to 199 (FFAL…IHLT). Heme b-binding residues include His-84 and His-98. Residues His-183 and His-197 each contribute to the heme b site. His-202 contributes to the a ubiquinone binding site. The next 4 membrane-spanning stretches (helical) occupy residues 227–247 (IKDI…ALFS), 289–309 (LGGV…PFLH), 321–341 (FSQL…WVGS), and 348–368 (FIII…ILFP).

The protein belongs to the cytochrome b family. In terms of assembly, the cytochrome bc1 complex contains 11 subunits: 3 respiratory subunits (MT-CYB, CYC1 and UQCRFS1), 2 core proteins (UQCRC1 and UQCRC2) and 6 low-molecular weight proteins (UQCRH/QCR6, UQCRB/QCR7, UQCRQ/QCR8, UQCR10/QCR9, UQCR11/QCR10 and a cleavage product of UQCRFS1). This cytochrome bc1 complex then forms a dimer. The cofactor is heme b.

The protein resides in the mitochondrion inner membrane. In terms of biological role, component of the ubiquinol-cytochrome c reductase complex (complex III or cytochrome b-c1 complex) that is part of the mitochondrial respiratory chain. The b-c1 complex mediates electron transfer from ubiquinol to cytochrome c. Contributes to the generation of a proton gradient across the mitochondrial membrane that is then used for ATP synthesis. This chain is Cytochrome b (MT-CYB), found in Numida meleagris (Helmeted guineafowl).